Reading from the N-terminus, the 263-residue chain is HTH-type transcriptional repressor NanR (263 aa).

Residues Met-1–Asn-21 are disordered. In terms of domain architecture, HTH gntR-type spans Lys-30–Pro-98. Positions Glu-58 to Ala-77 form a DNA-binding region, H-T-H motif.

Belongs to the NanR family.

Transcriptional repressor that controls expression of the genes required for the catabolism of sialic acids. This Escherichia coli O7:K1 (strain IAI39 / ExPEC) protein is HTH-type transcriptional repressor NanR.